The primary structure comprises 405 residues: Sesquiterpene synthase 16 (405 aa).

Residues Asp155, Asp159, and Glu309 each contribute to the Mg(2+) site. The DDXXD motif motif lies at Asp155–Asp159.

It belongs to the terpene synthase family. Tpsa subfamily. Mg(2+) is required as a cofactor. Mn(2+) serves as cofactor.

It functions in the pathway secondary metabolite biosynthesis; terpenoid biosynthesis. Its function is as follows. Sesquiterpene synthase involved in the biosynthesis of volatile compounds. No activity detected with geranyl diphosphate (GPP) and farnesyl diphosphate (FPP) as substrates. In Solanum habrochaites (Wild tomato), this protein is Sesquiterpene synthase 16.